The following is a 60-amino-acid chain: Short neurotoxin 1 (60 aa).

4 cysteine pairs are disulfide-bonded: C3–C22, C17–C39, C41–C52, and C53–C58.

It belongs to the three-finger toxin family. Short-chain subfamily. Type I alpha-neurotoxin sub-subfamily. As to expression, expressed by the venom gland.

The protein resides in the secreted. Functionally, binds to muscle nicotinic acetylcholine receptor (nAChR) and inhibit acetylcholine from binding to the receptor, thereby impairing neuromuscular transmission. The protein is Short neurotoxin 1 of Dendroaspis viridis (Western green mamba).